We begin with the raw amino-acid sequence, 870 residues long: MATACKRSPGESQSEDIEASRMKRAAAKHLIERYYHQLTEGCGNEACTNEFCASCPTFLRMDNNAAAIKALELYKINAKLCDPHPSKKGASSAYLENSKGASNNSEIKMNKKEGKDFKDVIYLTEEKVYEIYEFCRESEDYSPLIRVIGRIFSSAEALVLSFRKVKQHTKEELKSLQEKDEDKDEDEKEKAACSAAAMEEDSEASSSRMGDSSQGDNNVQKLGPDDVTVDIDAIRRVYSSLLANEKLETAFLNALVYLSPNVECDLTYHNVYTRDPNYLNLFIIVMENSNLHSPEYLEMALPLFCKAMCKLPLEAQGKLIRLWSKYSADQIRRMMETFQQLITYKVISNEFNSRNLVNDDDAIVAASKCLKMVYYANVVGGDVDTNHNEEDDEEPIPESSELTLQELLGDERRNKKGPRVDPLETELGVKTLDCRKPLISFEEFINEPLNDVLEMDKDYTFFKVETENKFSFMTCPFILNAVTKNLGLYYDNRIRMYSERRITVLYSLVQGQQLNPYLRLKVRRDHIIDDALVRLEMIAMENPADLKKQLYVEFEGEQGVDEGGVSKEFFQLVVEEIFNPDIGMFTYDEATKLFWFNPSSFETEGQFTLIGIVLGLAIYNNCILDVHFPMVVYRKLMGKKGTFRDLGDSHPVLYQSLKDLLEYEGSVEDDMMITFQISQTDLFGNPMMYDLKENGDKIPITNENRKEFVNLYSDYILNKSVEKQFKAFRRGFHMVTNESPLKYLFRPEEIELLICGSRNLDFQALEETTEYDGGYTRESVVIREFWEIVHSFTDEQKRLFLQFTTGTDRAPVGGLGKLKMIIAKNGPDTERLPTSHTCFNVLLLPEYSSKEKLKERLLKAITYAKGFGML.

Serine 8 is subject to Phosphoserine. A C4-type; atypical zinc finger spans residues 42 to 81; the sequence is CGNEACTNEFCASCPTFLRMDNNAAAIKALELYKINAKLC. Positions 171 to 180 are enriched in basic and acidic residues; it reads EELKSLQEKD. The disordered stretch occupies residues 171–223; the sequence is EELKSLQEKDEDKDEDEKEKAACSAAAMEEDSEASSSRMGDSSQGDNNVQKLG. Positions 208–220 are enriched in polar residues; the sequence is RMGDSSQGDNNVQ. A Phosphoserine modification is found at serine 213. Residues 542 to 870 form the HECT domain; that stretch reads NPADLKKQLY…ITYAKGFGML (329 aa). Tyrosine 654 is subject to Phosphotyrosine; by ABL1. Cysteine 838 functions as the Glycyl thioester intermediate in the catalytic mechanism.

As to quaternary structure, the active form is probably a homotrimer. Binds UBQLN1 and UBQLN2. Interacts with the 26S proteasome. Interacts with BPY2. Interacts with HIF1AN, MAPK6 and NEURL4; interaction with MAPK6 may be mediated by NEURL4. Interacts with the proteasomal subunit PSMD4. Interacts with BMAL1. Interacts with ARC. Interacts with ESR1 and WBP2. In terms of processing, phosphorylation at Tyr-654 by ABL1 impairs E3 ligase activity. Widely expressed. Most abundant in brain, heart and thymus.

The protein resides in the cytoplasm. Its subcellular location is the nucleus. It catalyses the reaction S-ubiquitinyl-[E2 ubiquitin-conjugating enzyme]-L-cysteine + [acceptor protein]-L-lysine = [E2 ubiquitin-conjugating enzyme]-L-cysteine + N(6)-ubiquitinyl-[acceptor protein]-L-lysine.. It participates in protein modification; protein ubiquitination. In terms of biological role, E3 ubiquitin-protein ligase which accepts ubiquitin from an E2 ubiquitin-conjugating enzyme in the form of a thioester and transfers it to its substrates. Several substrates have been identified including the BMAL1, ARC, LAMTOR1, RAD23A and RAD23B, MCM7 (which is involved in DNA replication), annexin A1, the PML tumor suppressor, and the cell cycle regulator CDKN1B. Additionally, may function as a cellular quality control ubiquitin ligase by helping the degradation of the cytoplasmic misfolded proteins. Finally, UBE3A also promotes its own degradation in vivo. Plays an important role in the regulation of the circadian clock: involved in the ubiquitination of the core clock component BMAL1, leading to its proteasomal degradation. Acts as a regulator of synaptic development by mediating ubiquitination and degradation of ARC. Required for synaptic remodeling in neurons by mediating ubiquitination and degradation of LAMTOR1, thereby limiting mTORC1 signaling and activity-dependent synaptic remodeling. Synergizes with WBP2 in enhancing PGR activity. This Mus musculus (Mouse) protein is Ubiquitin-protein ligase E3A.